Consider the following 559-residue polypeptide: Probable D-2-hydroxyglutarate dehydrogenase, mitochondrial (559 aa).

The transit peptide at 1–80 directs the protein to the mitochondrion; the sequence is MARRAAAGLL…MNFEVQKRSF (80 aa). Residues 131-310 enclose the FAD-binding PCMH-type domain; it reads YKGSSQLLLL…TKIAILTPAK (180 aa).

The protein belongs to the FAD-binding oxidoreductase/transferase type 4 family. Homodimer. FAD serves as cofactor.

The protein resides in the mitochondrion. The enzyme catalyses (R)-2-hydroxyglutarate + A = 2-oxoglutarate + AH2. Its function is as follows. Catalyzes the oxidation of D-2-hydroxyglutarate to alpha-ketoglutarate. In Oryza sativa subsp. japonica (Rice), this protein is Probable D-2-hydroxyglutarate dehydrogenase, mitochondrial (D2HGDH).